A 402-amino-acid chain; its full sequence is Bacillibactin exporter (402 aa).

11 helical membrane passes run 4–24 (IIAL…LIPV), 39–59 (VSLI…IAGY), 69–89 (ILLP…FAST), 104–124 (LQGI…GDLF), 162–182 (FVPF…VLFL), 212–232 (WLYT…GVLF), 247–267 (VAKG…SFIA), 278–298 (MKFC…ALWW), 302–322 (FYFL…ALPA), 342–362 (FYNS…AALM), and 368–388 (IIFI…LFTV).

Belongs to the major facilitator superfamily.

It localises to the cell membrane. Its function is as follows. Involved in secretion of bacillibactin. The protein is Bacillibactin exporter (ymfD) of Bacillus subtilis (strain 168).